Reading from the N-terminus, the 378-residue chain is Alkanesulfonate monooxygenase (378 aa).

Belongs to the SsuD family.

It catalyses the reaction an alkanesulfonate + FMNH2 + O2 = an aldehyde + FMN + sulfite + H2O + 2 H(+). In terms of biological role, catalyzes the desulfonation of aliphatic sulfonates. In Bacillus velezensis (strain DSM 23117 / BGSC 10A6 / LMG 26770 / FZB42) (Bacillus amyloliquefaciens subsp. plantarum), this protein is Alkanesulfonate monooxygenase.